Here is a 152-residue protein sequence, read N- to C-terminus: Ribonuclease pancreatic (152 aa).

A signal peptide spans 1–24 (MALDKSVILLPLLVLVLLVLGCLG). Residues Lys-31 and Arg-34 each contribute to the substrate site. His-36 serves as the catalytic Proton acceptor. A glycan (N-linked (GlcNAc...) asparagine) is linked at Asn-46. 4 cysteine pairs are disulfide-bonded: Cys-50/Cys-108, Cys-64/Cys-119, Cys-82/Cys-134, and Cys-89/Cys-96. Substrate-binding positions include 65–69 (KPVNT), Lys-90, and Arg-109. An N-linked (GlcNAc...) asparagine glycan is attached at Asn-112. His-143 (proton donor) is an active-site residue.

Belongs to the pancreatic ribonuclease family. In terms of assembly, monomer. Interacts with and forms tight 1:1 complexes with RNH1. Dimerization of two such complexes may occur. Interaction with RNH1 inhibits this protein.

Its subcellular location is the secreted. It catalyses the reaction an [RNA] containing cytidine + H2O = an [RNA]-3'-cytidine-3'-phosphate + a 5'-hydroxy-ribonucleotide-3'-[RNA].. The catalysed reaction is an [RNA] containing uridine + H2O = an [RNA]-3'-uridine-3'-phosphate + a 5'-hydroxy-ribonucleotide-3'-[RNA].. Its function is as follows. Endonuclease that catalyzes the cleavage of RNA on the 3' side of pyrimidine nucleotides. Acts on single-stranded and double-stranded RNA. The protein is Ribonuclease pancreatic (RNASE1) of Miopithecus talapoin (Angolan talapoin).